A 278-amino-acid chain; its full sequence is Dermonecrotic toxin LlSicTox-alphaIII3iii (278 aa).

His5 is an active-site residue. Mg(2+)-binding residues include Glu25 and Asp27. The active-site Nucleophile is His40. Cys44 and Cys50 are oxidised to a cystine. Residue Asp84 coordinates Mg(2+).

This sequence belongs to the arthropod phospholipase D family. Class I subfamily. Mg(2+) serves as cofactor. Expressed by the venom gland.

It is found in the secreted. It catalyses the reaction an N-(acyl)-sphingosylphosphocholine = an N-(acyl)-sphingosyl-1,3-cyclic phosphate + choline. It carries out the reaction an N-(acyl)-sphingosylphosphoethanolamine = an N-(acyl)-sphingosyl-1,3-cyclic phosphate + ethanolamine. The enzyme catalyses a 1-acyl-sn-glycero-3-phosphocholine = a 1-acyl-sn-glycero-2,3-cyclic phosphate + choline. The catalysed reaction is a 1-acyl-sn-glycero-3-phosphoethanolamine = a 1-acyl-sn-glycero-2,3-cyclic phosphate + ethanolamine. Dermonecrotic toxins cleave the phosphodiester linkage between the phosphate and headgroup of certain phospholipids (sphingolipid and lysolipid substrates), forming an alcohol (often choline) and a cyclic phosphate. This toxin acts on sphingomyelin (SM). It may also act on ceramide phosphoethanolamine (CPE), lysophosphatidylcholine (LPC) and lysophosphatidylethanolamine (LPE), but not on lysophosphatidylserine (LPS), and lysophosphatidylglycerol (LPG). It acts by transphosphatidylation, releasing exclusively cyclic phosphate products as second products. Induces dermonecrosis, hemolysis, increased vascular permeability, edema, inflammatory response, and platelet aggregation. The sequence is that of Dermonecrotic toxin LlSicTox-alphaIII3iii from Loxosceles laeta (South American recluse spider).